A 280-amino-acid polypeptide reads, in one-letter code: Large ribosomal subunit protein uL2 (280 aa).

Disordered stretches follow at residues 1–25 (MGIR…AEVT) and 230–280 (HPHG…SGRG). Positions 257-280 (KTRKRRKPSSKFIIRRRKTASGRG) are enriched in basic residues.

It belongs to the universal ribosomal protein uL2 family. As to quaternary structure, part of the 50S ribosomal subunit. Forms a bridge to the 30S subunit in the 70S ribosome.

Functionally, one of the primary rRNA binding proteins. Required for association of the 30S and 50S subunits to form the 70S ribosome, for tRNA binding and peptide bond formation. It has been suggested to have peptidyltransferase activity; this is somewhat controversial. Makes several contacts with the 16S rRNA in the 70S ribosome. This Gloeobacter violaceus (strain ATCC 29082 / PCC 7421) protein is Large ribosomal subunit protein uL2.